The sequence spans 103 residues: Co-chaperonin GroES (103 aa).

It belongs to the GroES chaperonin family. Heptamer of 7 subunits arranged in a ring. Interacts with the chaperonin GroEL.

The protein localises to the cytoplasm. Functionally, together with the chaperonin GroEL, plays an essential role in assisting protein folding. The GroEL-GroES system forms a nano-cage that allows encapsulation of the non-native substrate proteins and provides a physical environment optimized to promote and accelerate protein folding. GroES binds to the apical surface of the GroEL ring, thereby capping the opening of the GroEL channel. The protein is Co-chaperonin GroES of Synechococcus sp. (strain CC9605).